The chain runs to 733 residues: Neutral ceramidase 3 (733 aa).

A signal peptide spans 1 to 25 (MTRWSMSMHCTLFLLFLLRLTCIFS). Residue Ser307 is the Nucleophile of the active site. N-linked (GlcNAc...) asparagine glycosylation is present at Asn325.

Belongs to the neutral ceramidase family.

Its subcellular location is the secreted. The protein localises to the endoplasmic reticulum. It is found in the golgi apparatus. The catalysed reaction is an N-acylsphing-4-enine + H2O = sphing-4-enine + a fatty acid. Its function is as follows. Hydrolyzes the sphingolipid ceramide into sphingosine and free fatty acid. Promotes oxidative stress resistance. The sequence is that of Neutral ceramidase 3 from Arabidopsis thaliana (Mouse-ear cress).